The following is a 511-amino-acid chain: MKKRALVSVSDKTGVVEFVKGLLEQGIEVISTGGTKKLLEENGLQVIGISEVTGFPEIMDGRVKTLHPNIHGGLLAVRDNETHVAQMNELGIEPIDFVIVNLYPFKETIAKPDVTFADAIENIDIGGPTMIRSAAKNHKFVSVIVDPVDYDVVLAELEENGEVKEETKRKLAAKVFRHTAAYDALISNYLTEQMGEESPETLTVTFEKKQDLRYGENPHQKATFYKAPFAATSSVAYAEQLHGKELSYNNINDADAALSIVKEFTEPAVVAVKHMNPCGVGVGTDIHEAYTRAYEADPVSIFGGIIAANREIDKSTAEKLHEIFLEIIIAPSFSKEALEVLQNKKNLRLLTVNIEKSTSASKKLTSVQGGLLVQEEDTLSLDESTISIPTKREPSEQEWKDLKLAWKVVKHVKSNAIVLAKDDMTIGVGAGQMNRVGSAKIAITQAGEKAQGSALASDAFFPMPDTLEEAAKAGITAIIQPGGSIRDEDSIKVADTYGIAMVFTGVRHFKH.

An MGS-like domain is found at 1–145 (MKKRALVSVS…KNHKFVSVIV (145 aa)).

Belongs to the PurH family.

The catalysed reaction is (6R)-10-formyltetrahydrofolate + 5-amino-1-(5-phospho-beta-D-ribosyl)imidazole-4-carboxamide = 5-formamido-1-(5-phospho-D-ribosyl)imidazole-4-carboxamide + (6S)-5,6,7,8-tetrahydrofolate. It catalyses the reaction IMP + H2O = 5-formamido-1-(5-phospho-D-ribosyl)imidazole-4-carboxamide. It functions in the pathway purine metabolism; IMP biosynthesis via de novo pathway; 5-formamido-1-(5-phospho-D-ribosyl)imidazole-4-carboxamide from 5-amino-1-(5-phospho-D-ribosyl)imidazole-4-carboxamide (10-formyl THF route): step 1/1. It participates in purine metabolism; IMP biosynthesis via de novo pathway; IMP from 5-formamido-1-(5-phospho-D-ribosyl)imidazole-4-carboxamide: step 1/1. The chain is Bifunctional purine biosynthesis protein PurH from Bacillus cereus (strain ATCC 10987 / NRS 248).